The sequence spans 89 residues: Gamma-bungarotoxin (89 aa).

An N-terminal signal peptide occupies residues 1–21; the sequence is MKTLLLTLVVVTIVCLDLGYT. 5 disulfide bridges follow: Cys24/Cys45, Cys27/Cys32, Cys38/Cys66, Cys70/Cys81, and Cys82/Cys87. Positions 54–56 match the Cell attachment site motif; sequence RGD.

It belongs to the three-finger toxin family. Ancestral subfamily. Orphan group V sub-subfamily. Expressed by the venom gland.

It is found in the secreted. In terms of biological role, exhibits M2 muscarinic acetylcholine receptor (CHRM2)-blocking activity, but has a weak binding activity toward nicotinic AChR. Moreover, it inhibits collagen-induced platelet aggregation. This is Gamma-bungarotoxin from Bungarus multicinctus (Many-banded krait).